The primary structure comprises 3744 residues: MSLTEQIEQFASRFRDDDATLQSRYSTLSELYDIMELLNSPEDYHFFLQAVIPLLLNQLKEVPISYDAHSPEQKLRNSMLDIFNRCLMNQTFQPYAMEVLEFLLSVLPKENEENGILCMKVLTTLFKSFKSILQDKLDSFIRIIIQIYKNTPNLINQTFYEAGKAEQGDLDSPKEPQADELLDEFSKNDEEKDFPSKQSSTEPRFENSTSSNGLRSSMFSFKILSECPITMVTLYSSYKQLTSTSLPEFTPLIMNLLNIQIKQQQEAREQAESRGEHFTSISTEIINRPAYCDFILAQIKATSFLAYVFIRGYAPEFLQDYVNFVPDLIIRLLQDCPSELSSARKELLHATRHILSTNYKKLFLPKLDYLFDERILIGNGFTMHETLRPLAYSTVADFIHNIRSELQLSEIEKTIKIYTGYLLDESLALTVQIMSAKLLLNLVERILKLGKENPQEAPRAKKLLMIIIDSYMNRFKTLNRQYDTIMKYYGRYETHKKEKAEKLKNSIQDNDKESEEFMRKVLEPSDDDHLMPQPKKEDINDSPDVEMTESDKVVKNDVEMFDIKNYAPILLLPTPTNDPIKDAFYLYRTLMSFLKTIIHDLKVFNPPPNEYTVANPKLWASVSRVFSYEEVIVFKDLFHECIIGLKFFKDHNEKLSPETTKKHFDISMPSLPVSATKDARELMDYLAFMFMQMDNATFNEIIEQELPFVYERMLEDSGLLHVAQSFLTSEITSPNFAGILLRFLKGKLKDLGNVDFNTSNVLIRLFKLSFMSVNLFPNINEVVLLPHLNDLILNSLKYSTTAEEPLVYFYLIRTLFRSIGGGRFENLYRSIKPILQVLLQSLNQMILTARLPHERELYVELCITVPVRLSVLAPYLPFLMKPLVFALQQYPDLVSQGLRTLELCIDNLTAEYFDPIIEPVIDDVSKALFNLLQPQPFNHAISHNVVRILGKLGGRNRQFLKPPTDLTEKTELDIDAIADFKINGMPEDVPLSVTPGIQSALNILQSYKSDIHYRKSAYKYLTCVLLLMTKSSAEFPTNYTELLKTAVNSIKLERIGIEKNFDLEPTVNKRDYSNQENLFLRLLESVFYATSIKELKDDAMDLLNNLLDHFCLLQVNTTLLNKRNYNGTFNIDLKNPNFMLDSSLILDAIPFALSYYIPEVREVGVLAYKRIYEKSCLIYGEELALSHSFIPELAKQFIHLCYDETYYNKRGGVLGIKVLIDNVKSSSVFLKKYQYNLANGLLFVLKDTQSEAPSAITDSAEKLLIDLLSITFADVKEEDLGNKVLENTLTDIVCELSNANPKVRNACQKSLHTISNLTGIPIVKLMDHSKQFLLSPIFAKPLRALPFTMQIGNVDAITFCLSLPNTFLTFNEELFRLLQESIVLADAEDESLSTNIQKTTEYSTSEQLVQLRIACIKLLAIALKNEEFATAQQGNIRIRILAVFFKTMLKTSPEIINTTYEALKGSLAENSKLPKELLQNGLKPLLMNLSDHQKLTVPGLDALSKLLELLIAYFKVEIGRKLLDHLTAWCRVEVLDTLFGQDLAEQMPTKIIVSIINIFHLLPPQADMFLNDLLLKVMLLERKLRLQLDSPFRTPLARYLNRFHNPVTEYFKKNMTLRQLVLFMCNIVQRPEAKELAEDFEKELDNFYDFYISNIPKNQVRVVSFFTNMVDLFNTMVITNGDEWLKKKGNMILKLKDMLNLTLKTIKENSFYIDHLQLNQSIAKFQALYLRFTELSERDQNPLLLDFIDFSFSNGIKASYSLKKFIFHNIIASSNKEKQNNFINDATLFVLSDKCLDARIFVLKNVINSTLIYEVATSGSLKSYLVEDKKPKWLELLHNKIWKNSNAILAYDVLDHHDLFRFELLQLSAIFIKADPEIIAEIKKDIIKFCWNFIKLEDTLIKQSAYLVTSYFISKFDFPIKVVTQVFVALLRSSHVEARYLVKQSLDVLTPVLHERMNAAGTPDTWINWVKRVMVENSSSQNNILYQFLISHPDLFFNSRDLFISNIIHHMNKITFMSNSNSDSHTLAIDLASLILYWENKTLEITNVNNTKTDSDGDVVMSDSKSDINPVEADTTAIIVDANNNSPISLHLREACTAFLIRYVCASNHRAIETELGLRAINILSELISDKHWTNVNVKLVYFEKFLIFQDLDSENILYYCMNALDVLYVFFKNKTKEWIMENLPTIQNLLEKCIKSDHHDVQEALQKVLQVIMKAIKAQGVSVIIEEESPGKTFIQMLTSVITQDLQETSSVTAGVTLAWVLFMNFPDNIVPLLTPLMKTFSKLCKDHLSISQPKDAMALEEARITTKLLEKVLYILSLKVSLLGDSRRPFLSTVALLIDHSMDQNFLRKIVNMSRSWIFNTEIFPTVKEKAAILTKMLAFEIRGEPSLSKLFYEIVLKLFDQEHFNNTEITVRMEQPFLVGTRVEDIGIRKRFMTILDNSLERDIKERLYYVIRDQNWEFIADYPWLNQALQLLYGSFNREKELSLKNIYCLSPPSILQEYLPENAEMVTEVNDLELSNFVKGHIASMQGLCRIISSDFIDSLIEIFYQDPKAIHRAWVTLFPQVYKSIPKNEKYGFVRSIITLLSKPYHTRQISSRTNVINMLLDSISKIESLELPPHLVKYLAISYNAWYQSINILESIQSNTSIDNTKIIEANEDALLELYVNLQEEDMFYGLWRRRAKYTETNIGLSYEQIGLWDKAQQLYEVAQVKARSGALPYSQSEYALWEDNWIQCAEKLQHWDVLTELAKHEGFTDLLLECGWRVADWNSDRDALEQSVKSVMDVPTPRRQMFKTFLALQNFAESRKGDQEVRKLCDEGIQLSLIKWVSLPIRYTPAHKWLLHGFQQYMEFLEATQIYANLHTTTVQNLDSKAQEIKRILQAWRDRLPNTWDDVNMWNDLVTWRQHAFQVINNAYLPLIPALQQSNSNSNINTHAYRGYHEIAWVINRFAHVARKHNMPDVCISQLARIYTLPNIEIQEAFLKLREQAKCHYQNMNELTTGLDVISNTNLVYFGTVQKAEFFTLKGMFLSKLRAYEEANQAFATAVQIDLNLAKAWAQWGFFNDRRLSEEPNNISFASNAISCYLQAAGLYKNSKIRELLCRILWLISIDDASGMLTNAFDSFRGEIPVWYWITFIPQLLTSLSHKEANMVRHILIRIAKSYPQALHFQLRTTKEDFAVIQRQTMAVMGDKPDTNDRNGRRQPWEYLQELNNILKTAYPLLALSLESLVAQINDRFKSTTDEDLFRLINVLLIDGTLNYNRLPFPRKNPKLPENTEKNLVKFSTTLLAPYIRPKFNADFIDNKPDYETYIKRLRYWRRRLENKLDRASKKENLEVLCPHLSNFHHQKFEDIEIPGQYLLNKDNNVHFIKIARFLPTVDFVRGTHSSYRRLMIRGHDGSVHSFAVQYPAVRHSRREERMFQLYRLFNKSLSKNVETRRRSIQFNLPIAIPLSPQVRIMNDSVSFTTLHEIHNEFCKKKGFDPDDIQDFMADKLNAAHDDALPAPDMTILKVEIFNSIQTMFVPSNVLKDHFTSLFTQFEDFWLFRKQFASQYSSFVFMSYMMMINNRTPHKIHVDKTSGNVFTLEMLPSRFPYERVKPLLKNHDLSLPPDSPIFHNNEPVPFRLTPNIQSLIGDSALEGIFAVNLFTISRALIEPDNELNTYLALFIRDEIISWFSNLHRPIIENPQLREMVQTNVDLIIRKVAQLGHLNSTPTVTTQFILDCIGSAVSPRNLARTDVNFMPWF.

Ser2 is modified (N-acetylserine). 4 HEAT repeats span residues 2-40 (SLTE…LLNS), 46-92 (FFLQ…NQTF), 94-131 (PYAM…SFKS), and 135-172 (DKLD…DLDS). An HEAT region spans residues 2 to 2598 (SLTEQIEQFA…KPYHTRQISS (2597 aa)). Ser172 carries the phosphoserine modification. The span at 185–195 (FSKNDEEKDFP) shows a compositional bias: basic and acidic residues. Residues 185–212 (FSKNDEEKDFPSKQSSTEPRFENSTSSN) form a disordered region. Residues 196-212 (SKQSSTEPRFENSTSSN) show a composition bias toward polar residues. 3 HEAT repeats span residues 247 to 284 (PEFT…ISTE), 319 to 357 (QDYV…ILST), and 437 to 477 (KLLL…RFKT). Residues 522–539 (LEPSDDDHLMPQPKKEDI) are compositionally biased toward basic and acidic residues. The interval 522–546 (LEPSDDDHLMPQPKKEDINDSPDVE) is disordered. Position 542 is a phosphoserine (Ser542). 20 HEAT repeats span residues 588-628 (RTLM…VFSY), 734-771 (PNFA…LSFM), 779-821 (INEV…SIGG), 829-867 (RSIK…TVPV), 870-910 (SVLA…NLTA), 919-958 (PVID…RNRQ), 1074-1112 (NQEN…HFCL), 1188-1225 (SFIP…NVKS), 1283-1320 (KVLE…LTGI), 1369-1408 (TFNE…SEQL), 1435-1472 (NIRI…ENSK), 1476-1512 (ELLQ…LLIA), 1693-1734 (LKLK…RFTE), 1739-1776 (DQNP…SSNK), 1918-1955 (FPIK…VLHE), 2115-2155 (ELGL…LDSE), 2182-2219 (ENLP…AIKA), 2230-2267 (SPGK…FMNF), 2269-2307 (DNIV…ARIT), and 2536-2573 (IISS…SIPK). Residues 2599 to 3744 (RTNVINMLLD…RTDVNFMPWF (1146 aa)) form a head region. Residues 2622-3177 (LVKYLAISYN…HFQLRTTKED (556 aa)) enclose the FAT domain. A PI3K/PI4K catalytic domain is found at 3374 to 3732 (FLPTVDFVRG…CIGSAVSPRN (359 aa)). Positions 3380–3386 (FVRGTHS) are G-loop. The segment at 3563-3571 (MINNRTPHK) is catalytic loop. An activation loop region spans residues 3600-3625 (LKNHDLSLPPDSPIFHNNEPVPFRLT). The 33-residue stretch at 3712–3744 (TPTVTTQFILDCIGSAVSPRNLARTDVNFMPWF) folds into the FATC domain.

Belongs to the PI3/PI4-kinase family. TRA1 subfamily. Component of the 1.8 MDa SAGA (Spt-Ada-Gcn5 acetyltransferase) complex, which is composed of 19 subunits TRA1, SPT7, TAF5, NGG1/ADA3, SGF73, SPT20/ADA5, SPT8, TAF12, TAF6, HFI1/ADA1, UBP8, GCN5, ADA2, SPT3, SGF29, TAF10, TAF9, SGF11 and SUS1. The SAGA complex is composed of 4 modules, namely the HAT (histone acetyltransferase) module (GCN5, ADA2, NGG1/ADA3 and SGF29), the DUB (deubiquitinating) module (UBP8, SGF11, SGF73 and SUS1), the core or TAF (TBP-associated factor) module (TAF5, TAF6, TAF9, TAF10 and TAF12), and the Tra1 or SPT (Suppressor of Ty) module (TRA1, HFI1/ADA1, SPT3, SPT7, SPT8 and SPT20/ADA5). The Tra1/SPT module binds activators, the core module recruits TBP (TATA-binding protein), the HAT module contains the histone H3 acetyltransferase GCN5, and the DUB module comprises the histone H2B deubiquitinase UBP8. Also identified in an altered form of SAGA, named SALSA (SAGA altered, Spt8 absent) or SLIK (SAGA-like) complex, which contains a C-terminal truncated form of SPT7 and is missing SPT8. However, it has been shown that the SAGA and SAGA-like SALSA/SLIK transcriptional coactivators are structurally and biochemically equivalent. Component of the NuA4 acetyltransferase complex, which consists of the catalytic subunit ESA1 and the 12 non-catalytic subunits ACT1, ARP4, EAF1/VID21, SWC4/EAF2, EAF3, EAF5, EAF6, EAF7, EPL1, TRA1, YAF9 and YNG2. TRA1 is the scaffold subunit for binding to a variety of transcription activators or transcription factors to recruit NuA4 for targeted gene activation. Identified in the Ada.spt complex with NGG1/ADA3 and SPT7.

The protein localises to the nucleus. In terms of biological role, essential scaffold subunit of the transcription coactivator SAGA complex. SAGA acts as a general cofactor required for essentially all RNA polymerase II transcription. At the promoters, SAGA is required for transcription pre-initiation complex (PIC) recruitment. It influences RNA polymerase II transcriptional activity through different activities such as TBP interaction (via core/TAF module) and promoter selectivity, interaction with transcription activators (via Tra1/SPT module), and chromatin modification through histone acetylation (via HAT module) and deubiquitination (via DUB module). SAGA preferentially acetylates histones H3 (to form H3K9ac, H3K14ac, H3K18ac and H3K23ac) and H2B and deubiquitinates histone H2B. SAGA interacts with DNA via upstream activating sequences (UASs). Also identified in a modified version of SAGA named SALSA or SLIK. The cleavage of SPT7 and the absence of the SPT8 subunit in SLIK neither drive any major conformational differences in its structure compared with SAGA, nor significantly affect HAT, DUB, or DNA-binding activities. Component of the NuA4 histone H4/H2A acetyltransferase involved in transcription and DNA repair. This Saccharomyces cerevisiae (strain ATCC 204508 / S288c) (Baker's yeast) protein is SAGA complex/NuA4 acetyltransferase complex subunit TRA1.